A 431-amino-acid chain; its full sequence is Islet cell autoantigen 1-like protein (431 aa).

Positions 44-247 (ASDAELDAKL…TAQMMTQIQE (204 aa)) constitute an AH domain. 2 disordered regions span residues 295 to 316 (EEEE…PRDS) and 351 to 372 (CGSP…SLTS). Positions 301-316 (RFEREPAVARALPRDS) are enriched in basic and acidic residues. Over residues 356–372 (TGLTSQEPSVGPGSLTS) the composition is skewed to polar residues.

The protein is Islet cell autoantigen 1-like protein (Ica1l) of Mus musculus (Mouse).